The chain runs to 86 residues: Small ribosomal subunit protein bS20 (86 aa).

Belongs to the bacterial ribosomal protein bS20 family.

In terms of biological role, binds directly to 16S ribosomal RNA. The chain is Small ribosomal subunit protein bS20 from Rhodococcus jostii (strain RHA1).